Consider the following 58-residue polypeptide: Large ribosomal subunit protein bL32 (58 aa).

The protein belongs to the bacterial ribosomal protein bL32 family.

This chain is Large ribosomal subunit protein bL32, found in Thermobifida fusca (strain YX).